The following is a 245-amino-acid chain: Ribonuclease PH (245 aa).

Residues Arg-86 and 124-126 (GTR) contribute to the phosphate site.

The protein belongs to the RNase PH family. As to quaternary structure, homohexameric ring arranged as a trimer of dimers.

It catalyses the reaction tRNA(n+1) + phosphate = tRNA(n) + a ribonucleoside 5'-diphosphate. Its function is as follows. Phosphorolytic 3'-5' exoribonuclease that plays an important role in tRNA 3'-end maturation. Removes nucleotide residues following the 3'-CCA terminus of tRNAs; can also add nucleotides to the ends of RNA molecules by using nucleoside diphosphates as substrates, but this may not be physiologically important. Probably plays a role in initiation of 16S rRNA degradation (leading to ribosome degradation) during starvation. The chain is Ribonuclease PH from Bacillus anthracis (strain A0248).